An 81-amino-acid chain; its full sequence is Small ribosomal subunit protein bS16 (81 aa).

The protein belongs to the bacterial ribosomal protein bS16 family.

The protein is Small ribosomal subunit protein bS16 of Clostridium beijerinckii (strain ATCC 51743 / NCIMB 8052) (Clostridium acetobutylicum).